A 263-amino-acid polypeptide reads, in one-letter code: 3-methyl-2-oxobutanoate hydroxymethyltransferase (263 aa).

The Mg(2+) site is built by aspartate 45 and aspartate 84. Residues 45 to 46, aspartate 84, and lysine 112 contribute to the 3-methyl-2-oxobutanoate site; that span reads DS. Glutamate 114 provides a ligand contact to Mg(2+). The active-site Proton acceptor is glutamate 181.

This sequence belongs to the PanB family. As to quaternary structure, homodecamer; pentamer of dimers. It depends on Mg(2+) as a cofactor.

It localises to the cytoplasm. It catalyses the reaction 3-methyl-2-oxobutanoate + (6R)-5,10-methylene-5,6,7,8-tetrahydrofolate + H2O = 2-dehydropantoate + (6S)-5,6,7,8-tetrahydrofolate. The protein operates within cofactor biosynthesis; (R)-pantothenate biosynthesis; (R)-pantoate from 3-methyl-2-oxobutanoate: step 1/2. Its function is as follows. Catalyzes the reversible reaction in which hydroxymethyl group from 5,10-methylenetetrahydrofolate is transferred onto alpha-ketoisovalerate to form ketopantoate. The sequence is that of 3-methyl-2-oxobutanoate hydroxymethyltransferase from Buchnera aphidicola subsp. Schizaphis graminum (strain Sg).